The primary structure comprises 688 residues: Zinc finger CCCH domain-containing protein 22 (688 aa).

Residues 62–123 (ALLPPPPPPS…QPFSRSNGSV (62 aa)) are disordered. A compositionally biased stretch (low complexity) spans 101–117 (PLSASSPSSWAQAQPFS). The segment at 233–260 (GFGWKPCLYYARGFCKNGSSCRFVHGDD) adopts a C3H1-type zinc-finger fold. An RRM domain is found at 366–442 (RQIYLTFPAD…RVLVKPYKEK (77 aa)). Positions 487-522 (TNEMMLRRKLEEQQQAAELQQAIELHSRRLMDLQLL) form a coiled coil. The tract at residues 552-624 (LATTMVESPP…PTKSSVSAHQ (73 aa)) is disordered. A compositionally biased stretch (basic and acidic residues) spans 574 to 589 (TEERKMVNGGGDKEES). Polar residues predominate over residues 613 to 624 (ASPTKSSVSAHQ).

The chain is Zinc finger CCCH domain-containing protein 22 from Oryza sativa subsp. japonica (Rice).